A 243-amino-acid chain; its full sequence is MKIDILTLFPEMFAPLEHSIVGKAKEKGLLDIHYHNFRDHAEKARHVDDEPYGGGQGMLLRAQPIFDTMDSIQATKPRVILLDPAGKPFHQSYAEELALEEELIFICGHYEGYDERIKTLVTDEISLGDFVLTGGELAAMTMIDATVRLIPNVLGKQASHQEDSFSSGLLEYPQYTRPYDYRGMKVPDVLMSGHHEHIRLWRMEQSLKKTYLRRPDLLETYDFSDEERRIFDSIKSELSEGEN.

S-adenosyl-L-methionine-binding positions include Gly-108 and 127–132 (LGDFVL).

The protein belongs to the RNA methyltransferase TrmD family. As to quaternary structure, homodimer.

Its subcellular location is the cytoplasm. The catalysed reaction is guanosine(37) in tRNA + S-adenosyl-L-methionine = N(1)-methylguanosine(37) in tRNA + S-adenosyl-L-homocysteine + H(+). Functionally, specifically methylates guanosine-37 in various tRNAs. The chain is tRNA (guanine-N(1)-)-methyltransferase from Streptococcus equi subsp. zooepidemicus (strain H70).